Reading from the N-terminus, the 457-residue chain is Cell division protein FtsZ (457 aa).

Residues 26-30, 115-117, Glu146, Lys150, and Asp193 contribute to the GTP site; these read GGGGN and GTG. Positions 429–447 are enriched in basic and acidic residues; it reads KKDVVRSEESERPAFESER. Positions 429-457 are disordered; sequence KKDVVRSEESERPAFESERSSSPTTISFN. Residues 448-457 are compositionally biased toward polar residues; that stretch reads SSSPTTISFN.

This sequence belongs to the FtsZ family. Homodimer. Polymerizes to form a dynamic ring structure in a strictly GTP-dependent manner. Interacts directly with several other division proteins.

It localises to the cytoplasm. In terms of biological role, essential cell division protein that forms a contractile ring structure (Z ring) at the future cell division site. The regulation of the ring assembly controls the timing and the location of cell division. One of the functions of the FtsZ ring is to recruit other cell division proteins to the septum to produce a new cell wall between the dividing cells. Binds GTP and shows GTPase activity. In Porphyromonas gingivalis (strain ATCC BAA-308 / W83), this protein is Cell division protein FtsZ.